The following is a 285-amino-acid chain: Undecaprenyl-diphosphatase 2 (285 aa).

Transmembrane regions (helical) follow at residues 5 to 25 (MDLLHVFILAVIQGLAELLPV), 47 to 67 (MTFLLVMLHTGTMFAVIVYFW), 86 to 106 (WYVLLATAITGVLGLLLQSLI), 122 to 142 (LFSNSKLMAAALAAAGILIIL), 156 to 176 (LPSAMIIGAVQALCLPFRGFS), 198 to 218 (FSFALAVVLTPAVIVKELVRL), 235 to 255 (SLLLPSIFGMVFSFLTGLLAL), and 265 to 285 (GRWYLFGIYCLAFSGVVLTLA).

It belongs to the UppP family.

The protein resides in the cell inner membrane. It carries out the reaction di-trans,octa-cis-undecaprenyl diphosphate + H2O = di-trans,octa-cis-undecaprenyl phosphate + phosphate + H(+). Its function is as follows. Catalyzes the dephosphorylation of undecaprenyl diphosphate (UPP). Confers resistance to bacitracin. The chain is Undecaprenyl-diphosphatase 2 from Acinetobacter baylyi (strain ATCC 33305 / BD413 / ADP1).